Consider the following 496-residue polypeptide: WD repeat-containing protein 37 (496 aa).

2 stretches are compositionally biased toward polar residues: residues 1-13 (MPTESGSCSTARQ) and 22-31 (SLSIRRTNSS). The segment at 1–50 (MPTESGSCSTARQAKQKRKSHSLSIRRTNSSEQERTGLPREMLEGQDSKL) is disordered. The segment covering 32–47 (EQERTGLPREMLEGQD) has biased composition (basic and acidic residues). 2 WD repeats span residues 154–194 (GHRD…CLVK) and 197–236 (GHVGSVNSIKFHPSEQLALTASGDQTAHIWRYVVQLPTPQ). Residues 238 to 267 (VADTSQQISGEDEIECSDKDEPDIDGDVSS) are disordered. The segment covering 247–265 (GEDEIECSDKDEPDIDGDV) has biased composition (acidic residues). WD repeat units lie at residues 281 to 320 (SHQGVVIAADWLVGGKQVVTASWDRTANLYDVETSELVHS), 323 to 362 (GHDQELTHCCTHPTQRLVVTSSRDTTFRLWDFRDPSIHSV), 367 to 405 (GHTDTVTSAVFTVGDNVVSGSDDRTVKVWDLKNMRSPIA), 408 to 447 (RTDSAINRINVCVGQKIIALPHDNRQVRLFDMSGVRLARL), and 454 to 495 (GHRR…LLQE).

Forms homodimers. Interacts with PACS1. Interacts with PACS2.

It is found in the cytoplasm. Its subcellular location is the nucleus. Its function is as follows. Required for normal ER Ca2+ handling in lymphocytes. Together with PACS1, it plays an essential role in stabilizing peripheral lymphocyte populations. This is WD repeat-containing protein 37 (Wdr37) from Mus musculus (Mouse).